The primary structure comprises 306 residues: Protease HtpX homolog (306 aa).

2 helical membrane passes run 10-30 (TTLL…ATGG) and 33-53 (QTLS…YWFS). His135 contributes to the Zn(2+) binding site. The active site involves Glu136. His139 contributes to the Zn(2+) binding site. Helical transmembrane passes span 149-169 (AIAS…MYFG) and 181-201 (GLGL…ASLI). Zn(2+) is bound at residue Glu210.

It belongs to the peptidase M48B family. Requires Zn(2+) as cofactor.

It localises to the cell membrane. The chain is Protease HtpX homolog from Bifidobacterium longum (strain NCC 2705).